A 565-amino-acid chain; its full sequence is Maturase K (565 aa).

The protein belongs to the intron maturase 2 family. MatK subfamily.

The protein localises to the plastid. Its subcellular location is the chloroplast. Functionally, usually encoded in the trnK tRNA gene intron. Probably assists in splicing its own and other chloroplast group II introns. The chain is Maturase K from Staurastrum punctulatum (Green alga).